A 269-amino-acid chain; its full sequence is UPF0354 protein YtpQ (269 aa).

It belongs to the UPF0354 family.

The polypeptide is UPF0354 protein YtpQ (ytpQ) (Bacillus subtilis (strain 168)).